A 500-amino-acid polypeptide reads, in one-letter code: MPSSGRALLDSPLDSGSLTSLDSSVFCSEGEGEPLALGDCFTVNVGGSRFVLSQQALSCFPHTRLGKLAVVVASYRRPGALAAVPSPLELCDDANPVDNEYFFDRSSQAFRYVLHYYRTGRLHVMEQLCALSFLQEIQYWGIDELSIDSCCRDRYFRRKELSETLDFKKDTEDQESQHESEQDFSQGPCPTVRQKLWNILEKPGSSTAARIFGVISIIFVVVSIINMALMSAELSWLDLQLLEILEYVCISWFTGEFVLRFLCVRDRCRFLRKVPNIIDLLAILPFYITLLVESLSGSQTTQELENVGRIVQVLRLLRALRMLKLGRHSTGLRSLGMTITQCYEEVGLLLLFLSVGISIFSTVEYFAEQSIPDTTFTSVPCAWWWATTSMTTVGYGDIRPDTTTGKIVAFMCILSGILVLALPIAIINDRFSACYFTLKLKEAAVRQREALKKLTKNIATDSYISVNLRDVYARSIMEMLRLKGRERASTRSSGGDDFWF.

Residues 1–210 (MPSSGRALLD…EKPGSSTAAR (210 aa)) lie on the Cytoplasmic side of the membrane. Over residues 168–181 (KKDTEDQESQHESE) the composition is skewed to basic and acidic residues. A disordered region spans residues 168–189 (KKDTEDQESQHESEQDFSQGPC). Residues 211–231 (IFGVISIIFVVVSIINMALMS) traverse the membrane as a helical segment. At 232–238 (AELSWLD) the chain is on the extracellular side. Residues 239 to 259 (LQLLEILEYVCISWFTGEFVL) traverse the membrane as a helical segment. Residues 260-276 (RFLCVRDRCRFLRKVPN) lie on the Cytoplasmic side of the membrane. The helical transmembrane segment at 277 to 297 (IIDLLAILPFYITLLVESLSG) threads the bilayer. Residues 298–309 (SQTTQELENVGR) lie on the Extracellular side of the membrane. Residues 310 to 331 (IVQVLRLLRALRMLKLGRHSTG) traverse the membrane as a helical; Voltage-sensor segment. Residues 332–345 (LRSLGMTITQCYEE) lie on the Cytoplasmic side of the membrane. A helical transmembrane segment spans residues 346–366 (VGLLLLFLSVGISIFSTVEYF). Residues 392-397 (TVGYGD) carry the Selectivity filter motif. A helical transmembrane segment spans residues 407-427 (IVAFMCILSGILVLALPIAII). The Cytoplasmic segment spans residues 428 to 500 (NDRFSACYFT…RSSGGDDFWF (73 aa)).

This sequence belongs to the potassium channel family. V (TC 1.A.1.2) subfamily. Kv8.1/KCNV1 sub-subfamily. Heteromultimer with KCNB1 and KCNB2. Interacts with KCNC4 and KCND1. As to expression, detected in brain.

Its subcellular location is the cell membrane. Functionally, potassium channel subunit that does not form functional channels by itself. Modulates KCNB1 and KCNB2 channel activity by shifting the threshold for inactivation to more negative values and by slowing the rate of inactivation. Can down-regulate the channel activity of KCNB1, KCNB2, KCNC4 and KCND1, possibly by trapping them in intracellular membranes. The sequence is that of Potassium voltage-gated channel subfamily V member 1 (KCNV1) from Homo sapiens (Human).